Reading from the N-terminus, the 372-residue chain is tRNA N6-adenosine threonylcarbamoyltransferase (372 aa).

Positions 133, 137, and 154 each coordinate a divalent metal cation. Substrate is bound by residues 154 to 158 (YVSGG), aspartate 186, glycine 201, glutamate 205, and asparagine 301. Aspartate 330 is a binding site for a divalent metal cation.

Belongs to the KAE1 / TsaD family. Component of the EKC/KEOPS complex composed of at least BUD32, CGI121, GON7, KAE1 and PCC1; the whole complex dimerizes. Requires a divalent metal cation as cofactor.

The protein resides in the cytoplasm. It is found in the nucleus. It carries out the reaction L-threonylcarbamoyladenylate + adenosine(37) in tRNA = N(6)-L-threonylcarbamoyladenosine(37) in tRNA + AMP + H(+). In terms of biological role, component of the EKC/KEOPS complex that is required for the formation of a threonylcarbamoyl group on adenosine at position 37 (t(6)A37) in tRNAs that read codons beginning with adenine. The complex is probably involved in the transfer of the threonylcarbamoyl moiety of threonylcarbamoyl-AMP (TC-AMP) to the N6 group of A37. KAE1 likely plays a direct catalytic role in this reaction, but requires other protein(s) of the complex to fulfill this activity. The EKC/KEOPS complex also promotes both telomere uncapping and telomere elongation. The complex is required for efficient recruitment of transcriptional coactivators. In Candida albicans (strain SC5314 / ATCC MYA-2876) (Yeast), this protein is tRNA N6-adenosine threonylcarbamoyltransferase.